Consider the following 459-residue polypeptide: MDQSNRYADLSLKEEDLIAGGRHILVAYKMKPKAGHGYLEAAAHFAAESSTGTNVEVSTTDEFTKGVDALVYLIDEATEEMRIAFPMDLFDRNILDGRMMIVSFLTLVIGNNQGMGDIQHAKIYDFFMPPRAIQLFDGPSKDISDMWRILGRPVKDGGYIAGTIIKPKLGLRPEPFAQAAYQFWLGGDFIKNDEPQGNQTFAPMNKVMPLVHDAMKRAMDETGEAKLFSANITADDHYEMLARGDYILRTFGPDADKVAFLVDGYVGGPGMITTARRAFPNQYLHYHRAGHGAVTSPSAKRGYDAYVLAKMSRLQGASGIHVGTMGYGKMEGTHDDRAIAYIIERDSYTGPAYHQEWYGMKPTTPIISGGMNALRLPGFFENLGHGNVINTSGGGAYGHIDSPAAGATSLRQAYECWKAKADPIEWAKEHPEFARAFASFPGDADMLFPGWRDKLASHR.

Position 111 (Asn111) interacts with substrate. The active-site Proton acceptor is the Lys166. Substrate is bound at residue Lys168. 3 residues coordinate Mg(2+): Lys191, Asp193, and Glu194. Residue Lys191 is modified to N6-carboxylysine. The Proton acceptor role is filled by His287. Substrate contacts are provided by Arg288, His321, and Ser368.

Belongs to the RuBisCO large chain family. Type II subfamily. As to quaternary structure, homodimer. The cofactor is Mg(2+).

It catalyses the reaction 2 (2R)-3-phosphoglycerate + 2 H(+) = D-ribulose 1,5-bisphosphate + CO2 + H2O. The catalysed reaction is D-ribulose 1,5-bisphosphate + O2 = 2-phosphoglycolate + (2R)-3-phosphoglycerate + 2 H(+). Its function is as follows. RuBisCO catalyzes two reactions: the carboxylation of D-ribulose 1,5-bisphosphate, the primary event in carbon dioxide fixation, as well as the oxidative fragmentation of the pentose substrate. Both reactions occur simultaneously and in competition at the same active site. This Polaromonas naphthalenivorans (strain CJ2) protein is Ribulose bisphosphate carboxylase.